A 182-amino-acid polypeptide reads, in one-letter code: ATP-dependent protease subunit HslV (182 aa).

The active site involves T7. The Na(+) site is built by G162, C165, and T168.

It belongs to the peptidase T1B family. HslV subfamily. In terms of assembly, a double ring-shaped homohexamer of HslV is capped on each side by a ring-shaped HslU homohexamer. The assembly of the HslU/HslV complex is dependent on binding of ATP.

The protein resides in the cytoplasm. The enzyme catalyses ATP-dependent cleavage of peptide bonds with broad specificity.. Its activity is regulated as follows. Allosterically activated by HslU binding. Protease subunit of a proteasome-like degradation complex believed to be a general protein degrading machinery. The chain is ATP-dependent protease subunit HslV from Legionella pneumophila subsp. pneumophila (strain Philadelphia 1 / ATCC 33152 / DSM 7513).